Reading from the N-terminus, the 181-residue chain is Ribose 1,5-bisphosphate phosphokinase PhnN (181 aa).

12-19 (GPSGAGKD) contacts ATP.

It belongs to the ribose 1,5-bisphosphokinase family.

It catalyses the reaction alpha-D-ribose 1,5-bisphosphate + ATP = 5-phospho-alpha-D-ribose 1-diphosphate + ADP. It participates in metabolic intermediate biosynthesis; 5-phospho-alpha-D-ribose 1-diphosphate biosynthesis; 5-phospho-alpha-D-ribose 1-diphosphate from D-ribose 5-phosphate (route II): step 3/3. Functionally, catalyzes the phosphorylation of ribose 1,5-bisphosphate to 5-phospho-D-ribosyl alpha-1-diphosphate (PRPP). In Acidiphilium cryptum (strain JF-5), this protein is Ribose 1,5-bisphosphate phosphokinase PhnN.